The sequence spans 389 residues: Alpha-2B adrenergic receptor (389 aa).

The chain crosses the membrane as a helical span at residues 1–25 (AIAAVITFLILFTIFGNALVILAVL). The Cytoplasmic portion of the chain corresponds to 26–36 (TSRSLRAPQNL). Residues 37-62 (FLVSLAAADILVATLIIPFSLANELL) form a helical membrane-spanning segment. At 63–72 (GYWYFWRTWC) the chain is on the extracellular side. Residues cysteine 72 and cysteine 151 are joined by a disulfide bond. The helical transmembrane segment at 73-95 (EVYLALDVLFCTSSIVHLCAISL) threads the bilayer. Residues 96–117 (DRYWAVSRALEYNSKRTPRRIK) lie on the Cytoplasmic side of the membrane. A helical transmembrane segment spans residues 118–140 (CIILTVWLIAAAISLPPLIYKGD). Topologically, residues 141-156 (QGPQPRGRPQCMLNQE) are extracellular. Residues 157-180 (AWYILSSSIGSFFAPCLIMILVYL) form a helical membrane-spanning segment. Residues 181–353 (RIYLIAKRSN…LTREKRFTFV (173 aa)) lie on the Cytoplasmic side of the membrane. 2 disordered regions span residues 192–218 (RGPR…PLAL) and 231–310 (DGEA…HLQQ). The segment covering 234-249 (ANGHSKLTGEKERETS) has biased composition (basic and acidic residues). A helical membrane pass occupies residues 354 to 377 (LTVVIGVFVLCWFPFFFSYSLGAI). Topologically, residues 378–386 (CPQHCKVPH) are extracellular. The chain crosses the membrane as a helical span at residues 387–389 (GLF).

Belongs to the G-protein coupled receptor 1 family. Adrenergic receptor subfamily. ADRA2B sub-subfamily. As to quaternary structure, interacts with RAB26. Interacts with PPP1R9B.

Its subcellular location is the cell membrane. Alpha-2 adrenergic receptors mediate the catecholamine-induced inhibition of adenylate cyclase through the action of G proteins. The protein is Alpha-2B adrenergic receptor (ADRA2B) of Procavia capensis habessinica (Abyssinian hyrax).